Reading from the N-terminus, the 191-residue chain is Protein Ves (191 aa).

The protein belongs to the Ves family.

The chain is Protein Ves from Shigella boydii serotype 18 (strain CDC 3083-94 / BS512).